The sequence spans 589 residues: Sphingosine-1-phosphate lyase (589 aa).

At 1 to 58 (MSGVSNKTVSINGWYGMPIHLLREEGDFAQFMILTINELKIAIHGYLRNTPWYNMLKD) the chain is on the lumenal side. N-linked (GlcNAc...) asparagine glycosylation occurs at N6. A helical transmembrane segment spans residues 59–76 (YLFVIFCYKLISNFFYLL). Over 77 to 589 (KVYGPVRLAV…LGPGEDTATK (513 aa)) the chain is Cytoplasmic. K380 carries the post-translational modification N6-(pyridoxal phosphate)lysine.

Belongs to the group II decarboxylase family. Sphingosine-1-phosphate lyase subfamily. As to quaternary structure, homodimer. The cofactor is pyridoxal 5'-phosphate. Post-translationally, glycosylated.

The protein resides in the endoplasmic reticulum membrane. The catalysed reaction is sphinganine 1-phosphate = hexadecanal + phosphoethanolamine. It catalyses the reaction (4R)-hydroxysphinganine 1-phosphate = (2R)-hydroxyhexadecanal + phosphoethanolamine. The protein operates within lipid metabolism; sphingolipid metabolism. Sphingosine-1-phosphate lyase that cleaves phosphorylated sphingoid bases (PSBs), such as sphingosine-1-phosphate, into fatty aldehydes and phosphoethanolamine. Prefers C-16 dihydrosphingosine-l-phosphate (DHS-P) as a substrate. Regulates intracellular levels of sphingolipid long-chain base phosphates (LCBPs). Plays a role in the regulation of global responses to nutrient deprivation in yeast. The chain is Sphingosine-1-phosphate lyase from Saccharomyces cerevisiae (strain ATCC 204508 / S288c) (Baker's yeast).